Here is a 350-residue protein sequence, read N- to C-terminus: Phosphoribosylformylglycinamidine cyclo-ligase (350 aa).

Belongs to the AIR synthase family.

It is found in the cytoplasm. The enzyme catalyses 2-formamido-N(1)-(5-O-phospho-beta-D-ribosyl)acetamidine + ATP = 5-amino-1-(5-phospho-beta-D-ribosyl)imidazole + ADP + phosphate + H(+). It functions in the pathway purine metabolism; IMP biosynthesis via de novo pathway; 5-amino-1-(5-phospho-D-ribosyl)imidazole from N(2)-formyl-N(1)-(5-phospho-D-ribosyl)glycinamide: step 2/2. This Nitratidesulfovibrio vulgaris (strain DSM 19637 / Miyazaki F) (Desulfovibrio vulgaris) protein is Phosphoribosylformylglycinamidine cyclo-ligase.